The primary structure comprises 494 residues: Ammonium transporter Rh type C (494 aa).

Over 1–22 (MGNFIQGCKDYFSQQKNTNIRL) the chain is Cytoplasmic. The chain crosses the membrane as a helical span at residues 23–43 (TLPVVCFVWQIAMIILFGVFI). Over 44–74 (RYDEESDTHWVETKAHDNITSDIENDFYFRY) the chain is Extracellular. An N-linked (GlcNAc...) asparagine glycan is attached at asparagine 61. Residues 75–95 (PSFQDVHVMIFVGFGFLMTFL) traverse the membrane as a helical segment. The Cytoplasmic portion of the chain corresponds to 96 to 99 (KRYS). Residues 100-120 (FGAVGFNFLIASFGLQWALLM) form a helical membrane-spanning segment. Topologically, residues 121 to 133 (QGWFHSLDPQTGK) are extracellular. Residues 134–154 (IFIGVESLINADFCVAGCLIA) traverse the membrane as a helical segment. Over 155-166 (YGAVLGKVSPVQ) the chain is Cytoplasmic. Residues 167 to 187 (LLVMTLFGVTLFAVEEYIILN) traverse the membrane as a helical segment. Residues 188–194 (LLHARDA) lie on the Extracellular side of the membrane. The helical transmembrane segment at 195 to 215 (GGSMVIHTFGGYYGLTISWVL) threads the bilayer. Over 216–234 (YRPNLHQSKRMQGSVYHSD) the chain is Cytoplasmic. A helical transmembrane segment spans residues 235-255 (IFAMIGTLFLWMFWPSFNSAI). Residues 256–265 (TDHGDGQHRA) are Extracellular-facing. The chain crosses the membrane as a helical span at residues 266 to 286 (VINTYLCLASTVLTTVAISSF). Topologically, residues 287 to 297 (SQKTGKLDMVH) are cytoplasmic. Residues 298-318 (IQNSTLAGGVALGTAAEFMIS) form a helical membrane-spanning segment. Residue proline 319 is a topological domain, extracellular. A helical membrane pass occupies residues 320-340 (YGALIVGFLCGIISTMGYIFI). Residues 341 to 358 (SPFLEKTLKIQDTCGIHN) lie on the Cytoplasmic side of the membrane. Residues 359–379 (LHAMPGVIGGIVGAITAAAAS) form a helical membrane-spanning segment. Residues 380–411 (ESVYGKHALINTFDFTGDFKDRTVLTQGGYQA) lie on the Extracellular side of the membrane. Residues 412-432 (AGMCVSIVFGVAGGAIVGSIL) traverse the membrane as a helical segment. Over 433 to 494 (KLPIWGDPAD…SNFSVEHCES (62 aa)) the chain is Cytoplasmic.

The protein belongs to the ammonium transporter (TC 2.A.49) family. Rh subfamily. In terms of assembly, homotrimer.

The protein localises to the apical cell membrane. Functionally, functions as an ammonia transporter. May play a role in the elimination of ammonia in the gill. In Oncorhynchus mykiss (Rainbow trout), this protein is Ammonium transporter Rh type C (rhcg).